Consider the following 366-residue polypeptide: Ribosomal RNA large subunit methyltransferase M (366 aa).

Residues S187, 220–223 (SPGG), D239, D259, and D276 each bind S-adenosyl-L-methionine. Residue K305 is the Proton acceptor of the active site.

It belongs to the class I-like SAM-binding methyltransferase superfamily. RNA methyltransferase RlmE family. RlmM subfamily. As to quaternary structure, monomer.

The protein resides in the cytoplasm. The catalysed reaction is cytidine(2498) in 23S rRNA + S-adenosyl-L-methionine = 2'-O-methylcytidine(2498) in 23S rRNA + S-adenosyl-L-homocysteine + H(+). Functionally, catalyzes the 2'-O-methylation at nucleotide C2498 in 23S rRNA. The protein is Ribosomal RNA large subunit methyltransferase M of Tolumonas auensis (strain DSM 9187 / NBRC 110442 / TA 4).